The sequence spans 331 residues: Fructose-1,6-bisphosphatase class 1 (331 aa).

Mg(2+) contacts are provided by Glu88, Asp108, Leu110, and Asp111. Substrate contacts are provided by residues 111–114 and Asn201; that span reads DGSS. Glu273 is a binding site for Mg(2+).

The protein belongs to the FBPase class 1 family. Homotetramer. Mg(2+) serves as cofactor.

The protein resides in the cytoplasm. It carries out the reaction beta-D-fructose 1,6-bisphosphate + H2O = beta-D-fructose 6-phosphate + phosphate. It participates in carbohydrate biosynthesis; gluconeogenesis. The sequence is that of Fructose-1,6-bisphosphatase class 1 from Methylobacillus flagellatus (strain ATCC 51484 / DSM 6875 / VKM B-1610 / KT).